A 337-amino-acid chain; its full sequence is uncharacterized protein (337 aa).

A MurNAc-LAA domain is found at 3 to 174 (IAVRGGHNFK…IGKLIAEAIN (172 aa)).

The protein to C.perfringens pIP404 ORF10.

This is an uncharacterized protein from Clostridium perfringens (strain 13 / Type A).